A 369-amino-acid chain; its full sequence is 2-aminoethylphosphonate--pyruvate transaminase (369 aa).

Lys-193 carries the N6-(pyridoxal phosphate)lysine modification.

The protein belongs to the class-V pyridoxal-phosphate-dependent aminotransferase family. PhnW subfamily. Homodimer. Pyridoxal 5'-phosphate is required as a cofactor.

It catalyses the reaction (2-aminoethyl)phosphonate + pyruvate = phosphonoacetaldehyde + L-alanine. Its function is as follows. Involved in phosphonate degradation. The polypeptide is 2-aminoethylphosphonate--pyruvate transaminase (Burkholderia pseudomallei (strain K96243)).